Here is an 85-residue protein sequence, read N- to C-terminus: Neurotoxin beta-KTx 17 (85 aa).

An N-terminal signal peptide occupies residues 1–20 (MKQYIFFLALIVLVSTFAEA). Residues 21-37 (GKKTEILDKVKKVFSKG) constitute a propeptide that is removed on maturation. The region spanning 49–85 (ELGCPFIEKWCEDHCESKKQVGKCENFDCSCVKLGGK) is the BetaSPN-type CS-alpha/beta domain. 3 disulfides stabilise this stretch: Cys52/Cys72, Cys59/Cys77, and Cys63/Cys79.

This sequence belongs to the long chain scorpion toxin family. Class 2 subfamily. Expressed by the venom gland.

The protein resides in the secreted. Its function is as follows. Has a very weak effect to block voltage-gated potassium channel Kv1.1/KCNA1. This Lychas mucronatus (Chinese swimming scorpion) protein is Neurotoxin beta-KTx 17.